Reading from the N-terminus, the 486-residue chain is UDP-N-acetylmuramate--L-alanine ligase (486 aa).

ATP is bound at residue Gly-126–Ser-132.

Belongs to the MurCDEF family.

Its subcellular location is the cytoplasm. It carries out the reaction UDP-N-acetyl-alpha-D-muramate + L-alanine + ATP = UDP-N-acetyl-alpha-D-muramoyl-L-alanine + ADP + phosphate + H(+). The protein operates within cell wall biogenesis; peptidoglycan biosynthesis. Its function is as follows. Cell wall formation. This chain is UDP-N-acetylmuramate--L-alanine ligase, found in Corynebacterium glutamicum (strain R).